The following is a 361-amino-acid chain: MKDSVIRKLEGLLERNEEVLALLSDPSVIADQERFRALSKEYSQLEDVVKSFTAFQQATEDLEAAKEMLNEDDPELKEMAQEEMKEAKSVLETLEDELQILLLPKDPNDDNNAFIEIRAGAGGDEAAIFAGDLFRMYSKYSESNRWQIEVMNTNEGEHGGFKEVIAKISGEGVYGKLKFESGGHRVQRVPETESQGRVHTSACTVIVLPEIPEAEAIEINKADLKVDTFRASGAGGQHVNKTDSAIRITHIPTGIVVECQDQRSQHKNRAQAMSVLSARIQAVEDEKRRSEEESTRRNLVSSGDRSERIRTYNFPQGRMSDHRINLTLYRLNEVMEGVLDVIIEPLILENQADLLAALAED.

Glutamine 237 is subject to N5-methylglutamine. The span at 283–296 (VEDEKRRSEEESTR) shows a compositional bias: basic and acidic residues. A disordered region spans residues 283-305 (VEDEKRRSEEESTRRNLVSSGDR).

Belongs to the prokaryotic/mitochondrial release factor family. Post-translationally, methylated by PrmC. Methylation increases the termination efficiency of RF1.

It is found in the cytoplasm. Peptide chain release factor 1 directs the termination of translation in response to the peptide chain termination codons UAG and UAA. This Shewanella woodyi (strain ATCC 51908 / MS32) protein is Peptide chain release factor 1.